The chain runs to 402 residues: 4-hydroxy-3-methylbut-2-enyl diphosphate reductase (402 aa).

Cys-66 contacts [4Fe-4S] cluster. Residue His-96 participates in (2E)-4-hydroxy-3-methylbut-2-enyl diphosphate binding. His-96 is a binding site for dimethylallyl diphosphate. His-96 is a binding site for isopentenyl diphosphate. Cys-157 lines the [4Fe-4S] cluster pocket. His-185 contacts (2E)-4-hydroxy-3-methylbut-2-enyl diphosphate. His-185 lines the dimethylallyl diphosphate pocket. His-185 contacts isopentenyl diphosphate. Glu-187 functions as the Proton donor in the catalytic mechanism. Thr-250 contributes to the (2E)-4-hydroxy-3-methylbut-2-enyl diphosphate binding site. Cys-288 contacts [4Fe-4S] cluster. (2E)-4-hydroxy-3-methylbut-2-enyl diphosphate contacts are provided by Ser-317, Ser-318, Asn-319, and Ser-379. Positions 317, 318, 319, and 379 each coordinate dimethylallyl diphosphate. Isopentenyl diphosphate contacts are provided by Ser-317, Ser-318, Asn-319, and Ser-379.

The protein belongs to the IspH family. It depends on [4Fe-4S] cluster as a cofactor.

It catalyses the reaction isopentenyl diphosphate + 2 oxidized [2Fe-2S]-[ferredoxin] + H2O = (2E)-4-hydroxy-3-methylbut-2-enyl diphosphate + 2 reduced [2Fe-2S]-[ferredoxin] + 2 H(+). It carries out the reaction dimethylallyl diphosphate + 2 oxidized [2Fe-2S]-[ferredoxin] + H2O = (2E)-4-hydroxy-3-methylbut-2-enyl diphosphate + 2 reduced [2Fe-2S]-[ferredoxin] + 2 H(+). It functions in the pathway isoprenoid biosynthesis; dimethylallyl diphosphate biosynthesis; dimethylallyl diphosphate from (2E)-4-hydroxy-3-methylbutenyl diphosphate: step 1/1. The protein operates within isoprenoid biosynthesis; isopentenyl diphosphate biosynthesis via DXP pathway; isopentenyl diphosphate from 1-deoxy-D-xylulose 5-phosphate: step 6/6. Catalyzes the conversion of 1-hydroxy-2-methyl-2-(E)-butenyl 4-diphosphate (HMBPP) into a mixture of isopentenyl diphosphate (IPP) and dimethylallyl diphosphate (DMAPP). Acts in the terminal step of the DOXP/MEP pathway for isoprenoid precursor biosynthesis. The polypeptide is 4-hydroxy-3-methylbut-2-enyl diphosphate reductase (Crocosphaera subtropica (strain ATCC 51142 / BH68) (Cyanothece sp. (strain ATCC 51142))).